A 336-amino-acid polypeptide reads, in one-letter code: Methionyl-tRNA formyltransferase (336 aa).

Residue S112–P115 coordinates (6S)-5,6,7,8-tetrahydrofolate.

It belongs to the Fmt family.

The catalysed reaction is L-methionyl-tRNA(fMet) + (6R)-10-formyltetrahydrofolate = N-formyl-L-methionyl-tRNA(fMet) + (6S)-5,6,7,8-tetrahydrofolate + H(+). Attaches a formyl group to the free amino group of methionyl-tRNA(fMet). The formyl group appears to play a dual role in the initiator identity of N-formylmethionyl-tRNA by promoting its recognition by IF2 and preventing the misappropriation of this tRNA by the elongation apparatus. The polypeptide is Methionyl-tRNA formyltransferase (Trichodesmium erythraeum (strain IMS101)).